The chain runs to 348 residues: Mannonate dehydratase (348 aa).

It belongs to the mannonate dehydratase family. Requires Fe(2+) as cofactor. Mn(2+) is required as a cofactor.

The catalysed reaction is D-mannonate = 2-dehydro-3-deoxy-D-gluconate + H2O. The protein operates within carbohydrate metabolism; pentose and glucuronate interconversion. Functionally, catalyzes the dehydration of D-mannonate. The polypeptide is Mannonate dehydratase (Streptococcus uberis (strain ATCC BAA-854 / 0140J)).